We begin with the raw amino-acid sequence, 780 residues long: Molybdenum cofactor sulfurase (780 aa).

The residue at position 246 (K246) is an N6-(pyridoxal phosphate)lysine. C413 is an active-site residue. An MOSC domain is found at 635-780; the sequence is LRLLRQSGQR…MTCGDVVLVE (146 aa). S734 carries the post-translational modification Phosphoserine.

Belongs to the class-V pyridoxal-phosphate-dependent aminotransferase family. MOCOS subfamily. Pyridoxal 5'-phosphate is required as a cofactor.

It carries out the reaction Mo-molybdopterin + L-cysteine + AH2 = thio-Mo-molybdopterin + L-alanine + A + H2O. Sulfurates the molybdenum cofactor. Sulfation of molybdenum is essential for xanthine dehydrogenase (XDH) and aldehyde oxidase (ADO) enzymes in which molybdenum cofactor is liganded by 1 oxygen and 1 sulfur atom in active form. The polypeptide is Molybdenum cofactor sulfurase (Drosophila yakuba (Fruit fly)).